The chain runs to 322 residues: Aspartate--ammonia ligase (322 aa).

It belongs to the class-II aminoacyl-tRNA synthetase family. AsnA subfamily.

The protein localises to the cytoplasm. The enzyme catalyses L-aspartate + NH4(+) + ATP = L-asparagine + AMP + diphosphate + H(+). Its pathway is amino-acid biosynthesis; L-asparagine biosynthesis; L-asparagine from L-aspartate (ammonia route): step 1/1. This is Aspartate--ammonia ligase from Lactiplantibacillus plantarum (strain ATCC BAA-793 / NCIMB 8826 / WCFS1) (Lactobacillus plantarum).